The chain runs to 204 residues: MNNELKLGKRQKQILDFIKQSCKEKGYPPSVREIGQAVGLKSSSTVHTHLVRLEEKGLIRRDPAKPRAIIPLDDEPLLQSEALSVPVIGNVAAGSPILAEQNIDNYLSIPVDFLGSGNHFILKVKGDSMIEAGILDGDYLIVREQADASNGEIVVALLDNEATVKRFYRRDDYVELRPENALMDPITVNNVQVAGKVAGLLRRI.

Positions 31–51 (VREIGQAVGLKSSSTVHTHLV) form a DNA-binding region, H-T-H motif. Active-site for autocatalytic cleavage activity residues include Ser-128 and Lys-165.

It belongs to the peptidase S24 family. As to quaternary structure, homodimer.

The enzyme catalyses Hydrolysis of Ala-|-Gly bond in repressor LexA.. In terms of biological role, represses a number of genes involved in the response to DNA damage (SOS response), including recA and lexA. In the presence of single-stranded DNA, RecA interacts with LexA causing an autocatalytic cleavage which disrupts the DNA-binding part of LexA, leading to derepression of the SOS regulon and eventually DNA repair. The polypeptide is LexA repressor (Syntrophomonas wolfei subsp. wolfei (strain DSM 2245B / Goettingen)).